Reading from the N-terminus, the 124-residue chain is MESCSVAQAGVLTSPFMWRWTGMAGALSALDNTIEDDADDQLPCGEGRPGWVRGELLGSQGVCKDSKDLFVPTSSSLYGCFCVGLVSGMAISVLLLASDFRKLDFSRPEPCFEKEASLWFVAQH.

A helical transmembrane segment spans residues 77 to 97 (LYGCFCVGLVSGMAISVLLLA).

In terms of tissue distribution, expressed in gastrointestinal and immune tissue, as well as prostate, testis and ovary. Expressed in lamina propria and eosinophils but not in epithelial cells. Expression is greater in benign adjacent tissues than in colon tumors.

It localises to the membrane. In Homo sapiens (Human), this protein is Colorectal cancer-associated protein 1 (COLCA1).